Consider the following 197-residue polypeptide: ATP synthase subunit delta (197 aa).

This sequence belongs to the ATPase delta chain family. As to quaternary structure, F-type ATPases have 2 components, F(1) - the catalytic core - and F(0) - the membrane proton channel. F(1) has five subunits: alpha(3), beta(3), gamma(1), delta(1), epsilon(1). F(0) has three main subunits: a(1), b(2) and c(10-14). The alpha and beta chains form an alternating ring which encloses part of the gamma chain. F(1) is attached to F(0) by a central stalk formed by the gamma and epsilon chains, while a peripheral stalk is formed by the delta and b chains.

The protein localises to the cell inner membrane. Its function is as follows. F(1)F(0) ATP synthase produces ATP from ADP in the presence of a proton or sodium gradient. F-type ATPases consist of two structural domains, F(1) containing the extramembraneous catalytic core and F(0) containing the membrane proton channel, linked together by a central stalk and a peripheral stalk. During catalysis, ATP synthesis in the catalytic domain of F(1) is coupled via a rotary mechanism of the central stalk subunits to proton translocation. This protein is part of the stalk that links CF(0) to CF(1). It either transmits conformational changes from CF(0) to CF(1) or is implicated in proton conduction. This chain is ATP synthase subunit delta, found in Bartonella henselae (strain ATCC 49882 / DSM 28221 / CCUG 30454 / Houston 1) (Rochalimaea henselae).